We begin with the raw amino-acid sequence, 352 residues long: Nicotinate-nucleotide--dimethylbenzimidazole phosphoribosyltransferase (352 aa).

Glu318 acts as the Proton acceptor in catalysis.

This sequence belongs to the CobT family.

It catalyses the reaction 5,6-dimethylbenzimidazole + nicotinate beta-D-ribonucleotide = alpha-ribazole 5'-phosphate + nicotinate + H(+). It functions in the pathway nucleoside biosynthesis; alpha-ribazole biosynthesis; alpha-ribazole from 5,6-dimethylbenzimidazole: step 1/2. In terms of biological role, catalyzes the synthesis of alpha-ribazole-5'-phosphate from nicotinate mononucleotide (NAMN) and 5,6-dimethylbenzimidazole (DMB). This Geotalea uraniireducens (strain Rf4) (Geobacter uraniireducens) protein is Nicotinate-nucleotide--dimethylbenzimidazole phosphoribosyltransferase.